Reading from the N-terminus, the 240-residue chain is Probable transcriptional regulatory protein YrbC (240 aa).

The protein belongs to the TACO1 family.

Its subcellular location is the cytoplasm. The polypeptide is Probable transcriptional regulatory protein YrbC (yrbC) (Bacillus subtilis (strain 168)).